Reading from the N-terminus, the 307-residue chain is Vesicle-trafficking protein SEC22a (307 aa).

Ser-2 carries the post-translational modification N-acetylserine. Over Ser-2–Pro-187 the chain is Cytoplasmic. A phosphoserine mark is found at Ser-6 and Ser-8. One can recognise a Longin domain in the interval Ser-8–Ile-119. A helical transmembrane segment spans residues Ala-188–Ile-208. Topologically, residues Arg-209–Ser-226 are lumenal. Residues Tyr-227–Tyr-247 form a helical membrane-spanning segment. At Tyr-248–Asn-253 the chain is on the cytoplasmic side. Residues Val-254–Tyr-271 traverse the membrane as a helical segment. Residues Glu-272 to Arg-274 are Lumenal-facing. A helical membrane pass occupies residues Asn-275–Leu-295. Residues Arg-296–Val-307 lie on the Cytoplasmic side of the membrane.

This sequence belongs to the synaptobrevin family.

Its subcellular location is the endoplasmic reticulum membrane. Functionally, may be involved in vesicle transport between the ER and the Golgi complex. In Rattus norvegicus (Rat), this protein is Vesicle-trafficking protein SEC22a (Sec22a).